Consider the following 188-residue polypeptide: Elongation factor P-like protein (188 aa).

The protein belongs to the elongation factor P family.

This chain is Elongation factor P-like protein, found in Xanthomonas euvesicatoria pv. vesicatoria (strain 85-10) (Xanthomonas campestris pv. vesicatoria).